Here is a 214-residue protein sequence, read N- to C-terminus: 3-demethoxyubiquinol 3-hydroxylase (214 aa).

Fe cation-binding residues include Glu-63, Glu-93, His-96, Glu-145, Glu-177, and His-180.

It belongs to the COQ7 family. Requires Fe cation as cofactor.

Its subcellular location is the cell membrane. It catalyses the reaction a 5-methoxy-2-methyl-3-(all-trans-polyprenyl)benzene-1,4-diol + AH2 + O2 = a 3-demethylubiquinol + A + H2O. Its pathway is cofactor biosynthesis; ubiquinone biosynthesis. Functionally, catalyzes the hydroxylation of 2-nonaprenyl-3-methyl-6-methoxy-1,4-benzoquinol during ubiquinone biosynthesis. This is 3-demethoxyubiquinol 3-hydroxylase from Psychrobacter arcticus (strain DSM 17307 / VKM B-2377 / 273-4).